The sequence spans 288 residues: ATP synthase gamma chain (288 aa).

Belongs to the ATPase gamma chain family. F-type ATPases have 2 components, CF(1) - the catalytic core - and CF(0) - the membrane proton channel. CF(1) has five subunits: alpha(3), beta(3), gamma(1), delta(1), epsilon(1). CF(0) has three main subunits: a, b and c.

It localises to the cell inner membrane. Its function is as follows. Produces ATP from ADP in the presence of a proton gradient across the membrane. The gamma chain is believed to be important in regulating ATPase activity and the flow of protons through the CF(0) complex. The polypeptide is ATP synthase gamma chain (Rickettsia bellii (strain RML369-C)).